The chain runs to 226 residues: 7-cyano-7-deazaguanine synthase (226 aa).

Position 10-20 (10-20) interacts with ATP; that stretch reads FSGGQDSTTLA. Residues C190, C205, C208, and C211 each coordinate Zn(2+).

Belongs to the QueC family. Zn(2+) is required as a cofactor.

It carries out the reaction 7-carboxy-7-deazaguanine + NH4(+) + ATP = 7-cyano-7-deazaguanine + ADP + phosphate + H2O + H(+). It participates in purine metabolism; 7-cyano-7-deazaguanine biosynthesis. Catalyzes the ATP-dependent conversion of 7-carboxy-7-deazaguanine (CDG) to 7-cyano-7-deazaguanine (preQ(0)). The sequence is that of 7-cyano-7-deazaguanine synthase from Helicobacter pylori (strain Shi470).